The primary structure comprises 143 residues: Nucleoside diphosphate kinase (143 aa).

6 residues coordinate ATP: lysine 11, phenylalanine 59, arginine 87, threonine 93, arginine 104, and asparagine 114. Residue histidine 117 is the Pros-phosphohistidine intermediate of the active site.

Belongs to the NDK family. Homotetramer. Requires Mg(2+) as cofactor.

Its subcellular location is the cytoplasm. It catalyses the reaction a 2'-deoxyribonucleoside 5'-diphosphate + ATP = a 2'-deoxyribonucleoside 5'-triphosphate + ADP. The catalysed reaction is a ribonucleoside 5'-diphosphate + ATP = a ribonucleoside 5'-triphosphate + ADP. Its function is as follows. Major role in the synthesis of nucleoside triphosphates other than ATP. The ATP gamma phosphate is transferred to the NDP beta phosphate via a ping-pong mechanism, using a phosphorylated active-site intermediate. The protein is Nucleoside diphosphate kinase of Klebsiella pneumoniae (strain 342).